The chain runs to 280 residues: MAPRKGSSRVAKTNSLRRRKLASFLKDFDREVEIRIKQIESDRQNLLKEVDNLYNIEILRLPKALREMNWLDYFALGGNKQALEEAATADLDITEINKLTAEAIQTPLKSAKTRKVIQVDEMIVEEEEEEENERKNLQTARVKRCPPSKKRTQSIQGKGKGKRSSRANTVTPAVGRLEVSMVKPTPGLTPRFDSRVFKTPGLRTPAAGERIYNISGNGSPLADSKEIFLTVPVGGGESLRLLASDLQRHSIAQLDPEALGNIKKLSNRLAQICSSIRTHK.

Residues Met-1–Ile-58 form a required for interaction with INCENP region. Residues Met-1–Thr-88 form a required for centromere localization region. Positions Met-1–Ala-140 are required for interaction with SENP3. Residues Val-10–Lys-109 form a required to form a minimal CPC core complex that localizes to the central spindle and midbody and properly executes the role of the CPC during cytokinesis region. The interval Lys-20 to Gly-78 is required for interaction with INCENP and BIRC5. Thr-88 and Thr-94 each carry phosphothreonine; by TTK. Thr-106 carries the post-translational modification Phosphothreonine. Ser-110 carries the phosphoserine modification. The tract at residues Glu-130 to Thr-169 is disordered. Residue Lys-135 forms a Glycyl lysine isopeptide (Lys-Gly) (interchain with G-Cter in SUMO2) linkage. Positions Arg-141–Thr-152 are enriched in basic residues. Ser-165 is subject to Phosphoserine; by AURKB. The residue at position 169 (Thr-169) is a Phosphothreonine; by TTK. Thr-189 and Thr-204 each carry phosphothreonine. 2 positions are modified to phosphoserine: Ser-219 and Ser-224. Thr-230 carries the post-translational modification Phosphothreonine; by TTK. 2 positions are modified to phosphoserine: Ser-238 and Ser-244.

It belongs to the borealin family. In terms of assembly, may form homooligomers and homodimers. Component of the chromosomal passenger complex (CPC) composed of at least BIRC5/survivin, CDCA8/borealin, INCENP, AURKB or AURKC; in the complex forms a triple-helix bundle-based subcomplex with INCENP and BIRC5. Interacts with SENP3, UBE2I and RANBP2. Interacts (phosphorylated) with SGO1 and SGO2; the association is dependent on CDK1. Phosphorylated by TTK, essentially at Thr-88, Thr94, Thr-169 and Thr-230. Phosphorylation (probably by CDK1) promotes targeting of the CPC to centromeric DNA. Post-translationally, sumoylated by UBE2I and RANBP2. Desumoylated by SENP3 through the removal of SUMO2 and SUMO3.

The protein resides in the nucleus. Its subcellular location is the nucleolus. The protein localises to the cytoplasm. It localises to the chromosome. It is found in the centromere. The protein resides in the cytoskeleton. Its subcellular location is the spindle. In terms of biological role, component of the chromosomal passenger complex (CPC), a complex that acts as a key regulator of mitosis. The CPC complex has essential functions at the centromere in ensuring correct chromosome alignment and segregation and is required for chromatin-induced microtubule stabilization and spindle assembly. In the complex, it may be required to direct the CPC to centromeric DNA. The sequence is that of Borealin (CDCA8) from Pongo abelii (Sumatran orangutan).